A 490-amino-acid chain; its full sequence is Ketol-acid reductoisomerase (NADP(+)) (490 aa).

Residues 17–208 (LAQCEFMNAD…GGHRAGVLKS (192 aa)) enclose the KARI N-terminal Rossmann domain. NADP(+)-binding positions include 45-48 (CGAQ), Arg68, Arg76, Ser78, and 108-110 (DKQ). Residue His132 is part of the active site. NADP(+) is bound at residue Gly158. KARI C-terminal knotted domains lie at 209–353 (SFIA…AEQE) and 355–486 (FDNG…MSAM). The Mg(2+) site is built by Asp217, Glu221, Glu389, and Glu393. Ser414 lines the substrate pocket.

This sequence belongs to the ketol-acid reductoisomerase family. Mg(2+) is required as a cofactor.

The enzyme catalyses (2R)-2,3-dihydroxy-3-methylbutanoate + NADP(+) = (2S)-2-acetolactate + NADPH + H(+). It catalyses the reaction (2R,3R)-2,3-dihydroxy-3-methylpentanoate + NADP(+) = (S)-2-ethyl-2-hydroxy-3-oxobutanoate + NADPH + H(+). It functions in the pathway amino-acid biosynthesis; L-isoleucine biosynthesis; L-isoleucine from 2-oxobutanoate: step 2/4. The protein operates within amino-acid biosynthesis; L-valine biosynthesis; L-valine from pyruvate: step 2/4. Functionally, involved in the biosynthesis of branched-chain amino acids (BCAA). Catalyzes an alkyl-migration followed by a ketol-acid reduction of (S)-2-acetolactate (S2AL) to yield (R)-2,3-dihydroxy-isovalerate. In the isomerase reaction, S2AL is rearranged via a Mg-dependent methyl migration to produce 3-hydroxy-3-methyl-2-ketobutyrate (HMKB). In the reductase reaction, this 2-ketoacid undergoes a metal-dependent reduction by NADPH to yield (R)-2,3-dihydroxy-isovalerate. This is Ketol-acid reductoisomerase (NADP(+)) from Pseudoalteromonas translucida (strain TAC 125).